A 554-amino-acid chain; its full sequence is MVKVSLDNVKLLVDVDKEPFFKPSSTTVGDILTKDALEFIVLLHRTFNNKRKQLLENRQVVQKKLDSGSYHLDFLPETANIRNDPTWQGPILAPGLINRSTEITGPPLRNMLINALNAPVNTYMTDFEDSASPTWNNMVYGQVNLYDAIRNQIDFDTPRKSYKLNGNVANLPTIIVRPRGWHMVEKHLYVDDEPISASIFDFGLYFYHNAKELIKLGKGPYFYLPKMEHHLEAKLWNDVFCVAQDYIGIPRGTIRATVLIETLPAAFQMEEIIYQLRQHSSGLNCGRWDYIFSTIKRLRNDPNHILPNRDQVTMTSPFMDAYVKRLINTCHRRGVHAMGGMAAQIPIKDDPAANEKAMTKVRNDKIRELTNGHDGSWVAHPALAPICNEVFINMGTPNQIYFIPENVVTAANLLETKIPNGEITTEGIVQNLDIGLQYMEAWLRGSGCVPINNLMEDAATAEVSRCQLYQWVKHGVTLKDTGEKVTPELTEKILKEQVERLSKASPLGDKNKFALAAKYFLPEIRGEKFSEFLTTLLYDEIVSTKATPTDLSKL.

R177 acts as the Proton acceptor in catalysis. The Proton donor role is filled by D457. The SKL peroxisome targeting motif motif lies at 552-554 (SKL).

Belongs to the malate synthase family. Interacts with PEX9.

Its subcellular location is the peroxisome matrix. The enzyme catalyses glyoxylate + acetyl-CoA + H2O = (S)-malate + CoA + H(+). The protein operates within carbohydrate metabolism; glyoxylate cycle; (S)-malate from isocitrate: step 2/2. Functionally, malate synthase which takes part in the glyoxylate cycle. MLS1 activity is essential for cells to grow on oleic acid as a sole carbon source. Two steps of the glyoxylate cycle take place in the cytosol, the splitting of isocitrate into succinate and glyoxylate, and the dehydrogenation of malate to oxaloacetate. However, the formation of malate from glyoxylate and acetyl-CoA undertaken MLS1, occurs in the peroxisomes when cells are grown on oleic acid. The source of acetyl-CoA being either peroxisomal when breaking down fatty acids, or cytosolic when extra-cellular two-carbon substrates are used, therefore, although not strictly essential, the peroxisomal localization of MLS1 appears to be advantageous for cells growing on oleic acid, in that acetyl-CoA production and utilization are thereby intimately compartmentalized together to increase efficiency. The polypeptide is Malate synthase 1 (Saccharomyces cerevisiae (strain YJM789) (Baker's yeast)).